A 302-amino-acid chain; its full sequence is Zygote arrest protein 2.S (302 aa).

Disordered regions lie at residues Tyr-15–Pro-46, Val-88–Cys-117, and Leu-138–Lys-195. Positions Leu-159 to Glu-178 are enriched in basic and acidic residues. Residues Gln-203–Lys-288 form a 3CxxC-type zinc finger.

Belongs to the ZAR1 family. Oocyte-specific.

It localises to the cytoplasm. It is found in the cytoplasmic ribonucleoprotein granule. Its function is as follows. mRNA-binding protein required for maternal mRNA storage, translation and degradation during oocyte maturation. Probably promotes formation of some phase-separated membraneless compartment that stores maternal mRNAs in oocytes: acts by undergoing liquid-liquid phase separation upon binding to maternal mRNAs. Binds to the 3'-UTR of maternal mRNAs, inhibiting their translation. The sequence is that of Zygote arrest protein 2.S from Xenopus laevis (African clawed frog).